A 396-amino-acid polypeptide reads, in one-letter code: Flavohemoprotein (396 aa).

Residues 1–136 (MLDAQTIATV…LANVFINREA (136 aa)) enclose the Globin domain. His85 is a heme b binding site. Residues Tyr95 and Glu135 each act as charge relay system in the active site. The segment at 147-396 (GGWEGTRDFR…YECFGPHKVL (250 aa)) is reductase. The FAD-binding FR-type domain maps to 150 to 255 (EGTRDFRIVA…VAPAGDFFMA (106 aa)). FAD-binding positions include Tyr188 and 204 to 207 (RQYS). Position 268–273 (268–273 (GVGQTP)) interacts with NADP(+). 389–392 (CFGP) serves as a coordination point for FAD.

The protein belongs to the globin family. Two-domain flavohemoproteins subfamily. It in the C-terminal section; belongs to the flavoprotein pyridine nucleotide cytochrome reductase family. The cofactor is heme b. FAD is required as a cofactor.

The enzyme catalyses 2 nitric oxide + NADPH + 2 O2 = 2 nitrate + NADP(+) + H(+). It catalyses the reaction 2 nitric oxide + NADH + 2 O2 = 2 nitrate + NAD(+) + H(+). Functionally, is involved in NO detoxification in an aerobic process, termed nitric oxide dioxygenase (NOD) reaction that utilizes O(2) and NAD(P)H to convert NO to nitrate, which protects the bacterium from various noxious nitrogen compounds. Therefore, plays a central role in the inducible response to nitrosative stress. The chain is Flavohemoprotein from Shigella flexneri.